Here is a 382-residue protein sequence, read N- to C-terminus: 1-deoxy-D-xylulose 5-phosphate reductoisomerase (382 aa).

8 residues coordinate NADPH: Thr-10, Gly-11, Ser-12, Ile-13, Gly-36, Lys-37, Asn-38, and Asn-121. Lys-122 provides a ligand contact to 1-deoxy-D-xylulose 5-phosphate. Residue Glu-123 participates in NADPH binding. Asp-147 provides a ligand contact to Mn(2+). 4 residues coordinate 1-deoxy-D-xylulose 5-phosphate: Ser-148, Glu-149, Ser-173, and His-196. A Mn(2+)-binding site is contributed by Glu-149. Residue Gly-202 participates in NADPH binding. Residues Ser-209, Asn-214, Lys-215, and Glu-218 each contribute to the 1-deoxy-D-xylulose 5-phosphate site. Position 218 (Glu-218) interacts with Mn(2+).

Belongs to the DXR family. Mg(2+) is required as a cofactor. It depends on Mn(2+) as a cofactor.

It catalyses the reaction 2-C-methyl-D-erythritol 4-phosphate + NADP(+) = 1-deoxy-D-xylulose 5-phosphate + NADPH + H(+). Its pathway is isoprenoid biosynthesis; isopentenyl diphosphate biosynthesis via DXP pathway; isopentenyl diphosphate from 1-deoxy-D-xylulose 5-phosphate: step 1/6. Catalyzes the NADPH-dependent rearrangement and reduction of 1-deoxy-D-xylulose-5-phosphate (DXP) to 2-C-methyl-D-erythritol 4-phosphate (MEP). This chain is 1-deoxy-D-xylulose 5-phosphate reductoisomerase, found in Halalkalibacterium halodurans (strain ATCC BAA-125 / DSM 18197 / FERM 7344 / JCM 9153 / C-125) (Bacillus halodurans).